A 160-amino-acid chain; its full sequence is MPSLTHLDATGAANMVDVSDKAPTARTARAEGTIVMLPETLRLIREGDAKKGDVLGTARLAGIMAAKRTHELIPLCHPLLLAKVRVDCEPDPALPGIRITAEVKVQGPTGVEMEALTAVSVACLTVYDMVKAADRGMRIEGIRLLQKSGGRSGLYEAEPA.

Substrate is bound by residues 75-77 and 113-114; these read LCH and ME. Residue D128 is part of the active site.

The protein belongs to the MoaC family. Homohexamer; trimer of dimers.

The enzyme catalyses (8S)-3',8-cyclo-7,8-dihydroguanosine 5'-triphosphate = cyclic pyranopterin phosphate + diphosphate. It participates in cofactor biosynthesis; molybdopterin biosynthesis. Its function is as follows. Catalyzes the conversion of (8S)-3',8-cyclo-7,8-dihydroguanosine 5'-triphosphate to cyclic pyranopterin monophosphate (cPMP). This is Cyclic pyranopterin monophosphate synthase from Methylobacterium nodulans (strain LMG 21967 / CNCM I-2342 / ORS 2060).